Reading from the N-terminus, the 264-residue chain is uncharacterized protein (264 aa).

The chain crosses the membrane as a helical span at residues 9–29 (LVISILSLIATLSISFNIYFI).

The protein localises to the membrane. This is an uncharacterized protein from Ureaplasma parvum serovar 3 (strain ATCC 700970).